A 226-amino-acid chain; its full sequence is UPF0758 protein PSEEN5431 (226 aa).

The region spanning 102–224 (VMDNPLAVRR…PLSMIEHGWL (123 aa)) is the MPN domain. Positions 173, 175, and 186 each coordinate Zn(2+). Positions 173-186 (HNHPSGNCEPSQDD) match the JAMM motif motif.

The protein belongs to the UPF0758 family.

This chain is UPF0758 protein PSEEN5431, found in Pseudomonas entomophila (strain L48).